The following is a 112-amino-acid chain: C-X-C motif chemokine 6 (112 aa).

The signal sequence occupies residues 1-36 (MRLLSSRAARVSGPSGSLCALLALLLLTPPGPLASA). Disulfide bonds link Cys48–Cys74 and Cys50–Cys90.

The protein belongs to the intercrine alpha (chemokine CxC) family.

It is found in the secreted. Chemotactic for neutrophil granulocytes. Signals through binding and activation of its receptors (CXCR1 and CXCR2). In addition to its chemotactic and angiogenic properties, it has strong antibacterial activity against Gram-positive and Gram-negative bacteria (90-fold-higher when compared to CXCL5 and CXCL7). The polypeptide is C-X-C motif chemokine 6 (CXCL6) (Bos taurus (Bovine)).